The primary structure comprises 379 residues: Retinoic acid receptor RXR-alpha-B (379 aa).

Over residues 1–22 (MPVPEQKQTVQLSSPMNAVSSS) the composition is skewed to polar residues. Residues 1–24 (MPVPEQKQTVQLSSPMNAVSSSED) form a disordered region. Residues 1–53 (MPVPEQKQTVQLSSPMNAVSSSEDIKPPLGLNGVMKVPAHRIGTLSLSLTKHI) form a modulating region. The nuclear receptor DNA-binding region spans 51–126 (KHICAICGDR…MGMKREAVQE (76 aa)). Zn(2+) contacts are provided by Cys54, Cys57, Cys71, and Cys74. Residues 54–74 (CAICGDRSSGKHYGVYSCEGC) form an NR C4-type zinc finger. Positions 79-84 (KRTVRK) are nuclear localization signal. Residues Cys90, Cys96, Cys106, and Cys109 each coordinate Zn(2+). The segment at 90–109 (CRDNKDCMIDKRQRNRCQYC) adopts an NR C4-type zinc-finger fold. Residues 120–141 (KREAVQEERQRAKERSEAEFGG) are hinge. Residues 144-375 (NEDMPVEKIL…TFLMEMLEAP (232 aa)) enclose the NR LBD domain. Residues Arg233 and Ala244 each coordinate 9-cis-retinoate. The all-trans-retinoate site is built by Arg233 and Ala244. The required for nuclear export stretch occupies residues 265-285 (RVLTELVSKMRDMQMDKTELG). The segment at 364–375 (IDTFLMEMLEAP) is AF-2.

The protein belongs to the nuclear hormone receptor family. NR2 subfamily. In terms of assembly, homodimer. Heterodimer; with a rar molecule. Binds DNA preferentially as a rar/rxr heterodimer. Uniform expression from the blastula to mid-gastrula stages. At 12 hours post-fertilization (hpf), expressed strongly in the tail and weakly elsewhere. At 24 hpf, weak expression in the forebrain, eyes and pharyngeal endoderm and continued expression in the tail mesoderm. At 48 hpf, anterior expression limited to ventral cells underlying the head, medial expression in the pectoral fin bud mesoderm and continued tail expression.

It localises to the nucleus. Receptor for retinoic acid that acts as a transcription factor. Forms homo- or heterodimers with retinoic acid receptors (rars) and binds to target response elements in response to their ligands, all-trans or 9-cis retinoic acid, to regulate gene expression in various biological processes. The rar/rxr heterodimers bind to the retinoic acid response elements (RARE) composed of tandem 5'-AGGTCA-3' sites known as DR1-DR5 to regulate transcription. The high affinity ligand for rxrs is 9-cis retinoic acid. In the absence of ligand, the rar/rxr heterodimers associate with a multiprotein complex containing transcription corepressors that induce histone deacetylation, chromatin condensation and transcriptional suppression. On ligand binding, the corepressors dissociate from the receptors and coactivators are recruited leading to transcriptional activation. The sequence is that of Retinoic acid receptor RXR-alpha-B (rxrab) from Danio rerio (Zebrafish).